Reading from the N-terminus, the 467-residue chain is Gamma-aminobutyric acid receptor subunit rho-3 (467 aa).

Residues 1–24 (MVLAFQLVSFTYIWIILKPNVCAA) form the signal peptide. Residues 25 to 266 (SNIKMTHQRC…LFINFVLRRH (242 aa)) lie on the Extracellular side of the membrane. 4-aminobutanoate is bound by residues Arg-111 and Ser-175. A disulfide bond links Cys-184 and Cys-198. 4-aminobutanoate is bound at residue Glu-203. A glycan (N-linked (GlcNAc...) asparagine) is linked at Asn-220. Residues 267–287 (VFFFVLQTYFPAILMVMLSWV) form a helical membrane-spanning segment. At 288–299 (SFWIDRRAVPAR) the chain is on the cytoplasmic side. Residues 300–320 (VSLGITTVLTMSTIITAVSAS) traverse the membrane as a helical segment. Residues 321–331 (MPQVSYLKAVD) are Extracellular-facing. A helical membrane pass occupies residues 332–352 (VYLWVSSLFVFLSVIEYAAVN). An interaction with SQSTM1 region spans residues 347 to 448 (EYAAVNYLTT…NNHVIDTYSR (102 aa)). Over 353 to 446 (YLTTVEERKQ…LENNHVIDTY (94 aa)) the chain is Cytoplasmic. Residues 447-467 (SRILFPIVYILFNLFYWGVYV) form a helical membrane-spanning segment.

Belongs to the ligand-gated ion channel (TC 1.A.9) family. Gamma-aminobutyric acid receptor (TC 1.A.9.5) subfamily. GABRR3 sub-subfamily. As to quaternary structure, three rho subunits (rho-1/GBRR1, rho-2/GBRR2 and rho-3/GBRR3) coassemble either to form functional homopentamers or heteropentamers. Forms a ternary complex with SQSTM1 and PRKCZ.

The protein localises to the postsynaptic cell membrane. Its subcellular location is the cell membrane. It catalyses the reaction chloride(in) = chloride(out). With respect to regulation, inhibited by TPMPA, a rho-specific antagonist, when forming a homopentamer. Its function is as follows. Rho subunit of the pentameric ligand-gated chloride channels responsible for mediating the effects of gamma-aminobutyric acid (GABA), the major inhibitory neurotransmitter in the brain. Rho-containing GABA-gated chloride channels are a subclass of GABA(A) receptors (GABAARs) entirely composed of rho subunits, where GABA molecules bind at the rho intersubunit interfaces. When activated by GABA, rho-GABAARs selectively allow the flow of chloride anions across the cell membrane down their electrochemical gradient. This chain is Gamma-aminobutyric acid receptor subunit rho-3, found in Homo sapiens (Human).